The following is a 145-amino-acid chain: SsrA-binding protein (145 aa).

This sequence belongs to the SmpB family.

The protein resides in the cytoplasm. Required for rescue of stalled ribosomes mediated by trans-translation. Binds to transfer-messenger RNA (tmRNA), required for stable association of tmRNA with ribosomes. tmRNA and SmpB together mimic tRNA shape, replacing the anticodon stem-loop with SmpB. tmRNA is encoded by the ssrA gene; the 2 termini fold to resemble tRNA(Ala) and it encodes a 'tag peptide', a short internal open reading frame. During trans-translation Ala-aminoacylated tmRNA acts like a tRNA, entering the A-site of stalled ribosomes, displacing the stalled mRNA. The ribosome then switches to translate the ORF on the tmRNA; the nascent peptide is terminated with the 'tag peptide' encoded by the tmRNA and targeted for degradation. The ribosome is freed to recommence translation, which seems to be the essential function of trans-translation. This is SsrA-binding protein from Mycoplasma genitalium (strain ATCC 33530 / DSM 19775 / NCTC 10195 / G37) (Mycoplasmoides genitalium).